Reading from the N-terminus, the 302-residue chain is Sulfate adenylyltransferase subunit 2 (302 aa).

The protein belongs to the PAPS reductase family. CysD subfamily. Heterodimer composed of CysD, the smaller subunit, and CysN.

It catalyses the reaction sulfate + ATP + H(+) = adenosine 5'-phosphosulfate + diphosphate. It participates in sulfur metabolism; hydrogen sulfide biosynthesis; sulfite from sulfate: step 1/3. Its function is as follows. With CysN forms the ATP sulfurylase (ATPS) that catalyzes the adenylation of sulfate producing adenosine 5'-phosphosulfate (APS) and diphosphate, the first enzymatic step in sulfur assimilation pathway. APS synthesis involves the formation of a high-energy phosphoric-sulfuric acid anhydride bond driven by GTP hydrolysis by CysN coupled to ATP hydrolysis by CysD. The chain is Sulfate adenylyltransferase subunit 2 from Yersinia enterocolitica serotype O:8 / biotype 1B (strain NCTC 13174 / 8081).